The following is a 5142-amino-acid chain: MGNEASLEGEGLPEGLAAAAAAGGGASGAGSPSHTAIPAGMEADLSQLSEEERRQIAAVMSRAQGLPKGSVPPAAAESPSMHRKQELDSSHPPKQSGRPPDPGRPAQPGLSKSRTTDTFRSEQKLPGRSPSTISLKESKSRTDLKEEHKSSMMPGFLSEVNALSAVSSVVNKFNPFDLISDSEASQEETTKKQKVVQKEQGKPEGIIKPPLQQQPPKPIPKQQGPGRDPLQQDGTPKSISSQQPEKIKSQPPGTGKPIQGPTQTPQTDHAKLPLQRDASRPQTKQADIVRGESVKPSLPSPSKPPIQQPTPGKPPAQQPGHEKSQPGPAKPPAQPSGLTKPLAQQPGTVKPPVQPPGTTKPPAQPLGPAKPPAQQTGSEKPSSEQPGPKALAQPPGVGKTPAQQPGPAKPPTQQVGTPKPLAQQPGLQSPAKAPGPTKTPVQQPGPGKIPAQQAGPGKTSAQQTGPTKPPSQLPGPAKPPPQQPGPAKPPPQQPGSAKPPSQQPGSTKPPPQQPGPAKPSPQQPGSTKPPSQQPGSAKPSAQQPSPAKPSAQQSTKPVSQTGSGKPLQPPTVSPSAKQPPSQGLPKTICPLCNTTELLLHVPEKANFNTCTECQTTVCSLCGFNPNPHLTEVKEWLCLNCQMKRALGGDLAPVPSSPQPKLKTAPVTTTSAVSKSSPQPQQTSPKKDAAPKQDLSKAPEPKKPPPLVKQPTLHGSPSAKAKQPPEADSLSKPAPPKEPSVPSEQDKAPVADDKPKQPKMVKPTTDLVSSSSATTKPDIPSSKVQSQAEEKTTPPLKTDSAKPSQSFPPTGEKVSPFDSKAIPRPASDSKIISHPGPSSESKGQKQVDPVQKKEEPKKAQTKMSPKPDAKPMPKGSPTPPGPRPTAGQTVPTPQQSPKPQEQSRRFSLNLGSITDAPKSQPTTPQETVTGKLFGFGASIFSQASNLISTAGQPGPHSQSGPGAPMKQAPAPSQPPTSQGPPKSTGQAPPAPAKSIPVKKETKAPAAEKLEPKAEQAPTVKRTETEKKPPPIKDSKSLTAEPQKAVLPTKLEKSPKPESTCPLCKTELNIGSKDPPNFNTCTECKNQVCNLCGFNPTPHLTEIQEWLCLNCQTQRAISGQLGDIRKMPPAPSGPKASPMPVPTESSSQKTAVPPQVKLVKKQEQEVKTEAEKVILEKVKETLSMEKIPPMVTTDQKQEESKLEKDKASALQEKKPLPEEKKLIPEEEKIRSEEKKPLLEEKKPTPEDKKLLPEAKTSAPEEQKHDLLKSQVQIAEEKLEGRVAPKTVQEGKQPQTKMEGLPSGTPQSLPKEDDKTTKTIKEQPQPPCTAKPDQVEPGKEKTEKEDDKSDTSSSQQPKSPQGLSDTGYSSDGISSSLGEIPSLIPTDEKDILKGLKKDSFSQESSPSSPSDLAKLESTVLSILEAQASTLADEKSEKKTQPHEVSPEQPKDQEKTQSLSETLEITISEEEIKESQEERKDTFKKDSQQDIPSSKDHKEKSEFVDDITTRREPYDSVEESSESENSPVPQRKRRTSVGSSSSDEYKQEDSQGSGEEEDFIRKQIIEMSADEDASGSEDDEFIRNQLKEISSSTESQKKEETKGKGKITAGKHRRLTRKSSTSIDEDAGRRHSWHDEDDEAFDESPELKYRETKSQESEELVVTGGGGLRRFKTIELNSTIADKYSAESSQKKTSLYFDEEPELEMESLTDSPEDRSRGEGSSSLHASSFTPGTSPTSVSSLDEDSDSSPSHKKGESKQQRKARHRPHGPLLPTIEDSSEEEELREEEELLKEQEKQREIEQQQRKSSSKKSKKDKDELRAQRRRERPKTPPSNLSPIEDASPTEELRQAAEMEELHRSSCSEYSPSIESDPEGFEISPEKIIEVQKVYKLPTAVSLYSPTDEQSIMQKEGSQKALKSAEEMYEEMMHKTHKYKAFPAANERDEVFEKEPLYGGMLIEDYIYESLVEDTYNGSVDGSLLTRQEEENGFMQQKGREQKIRLSEQIYEDPMQKITDLQKEFYELESLHSVVPQEDIVSSSFIIPESHEIVDLGTMVTSTEEERKLLDADAAYEELMKRQQMQLTPGSSPTQAPIGEDMTESTMDFDRMPDASLTSSVLSGASLTDSTSSATLSIPDVKITQHFSTEEIEDEYVTDYTREIQEIIAHESLILTYSEPSESATSVPPSDTPSLTSSVSSVCTTDSSSPITTLDSITTVYTEPVDMITKFEDSEEISSSTYFPGSIIDYPEEISVSLDRTAPPDGRASADHIVISLSDMASSIIESVVPKPEGPVADTVSTDLLISEKDPVKKAKKETGNGIILEVLEAYRDKKELEAERTKSSLSETVFDHPPSSVIALPMKEQLSTTYFTSGETFGQEKPASQLPSGSPSVSSLPAKPRPFFRSSSLDISAQPPPPPPPPPPPPPPPPPPPPPPLPPPTSPKPTILPKKKLTVASPVTTATPLFDAVTTLETTAVLRSNGLPVTRICTTAPPPVPPKPSSIPSGLVFTHRPEPSKPPIAPKPVIPQLPTTTQKPTDIHPKPTGLSLTSSMTLNLVTSADYKLPSPTSPLSPHSNKSSPRFSKSLTETYVVITLPSEPGTPTDSSASQAITSWPLGSPSKDLVSVEPVFSVVPPVTAVEIPISSEQTFYISGALQTFSATPVTAPSSFQAAPTSVTQFLTTEVSKTEVSATRSTAPSVGLSSISITIPPEPLALDNIHLEKPQYKEDGKLQLVGDVIDLRTVPKVEVKTTDKCIDLSASTMDVKRQITANEVYGKQISAVQPSIINLSVTSSIVTPVSLATETVTFVTCTASASYTTGTESLVGAEHAMTTPLQLTTSKHAEPPYRIPSDQVFPIAREEAPINLSLGTPAHAVTLAITKPVTVPPVGVTNGWTDSTVSQGITDGEVVDLSTTKSHRTVVTMDESTSSVMTKIIEDEKPVDLTAGRRAVCCDVVYKLPFGRSCTAQQPATTLPEDRFGYRDDHYQYDRSGPYGYRGIGGMKPSMSDTNLAEAGHFFYKSKNAFDYSEGTDTAVDLTSGRVTTGEVMDYSSKTTGPYPETRQVISGAGISTPQYSTARMTPPPGPQYCVGSVLRSSNGVVYSSVATPTPSTFAITTQPGSIFSTTVRDLSGIHTADAVTSLPAMHHSQPMPRSYFITTGASETDIAVTGIDISASLQTITMESLTAETIDSVPTLTTASEVFPEVVGDESALLIVPEEDKQQQQLDLERELLELEKIKQQRFAEELEWERQEIQRFREQEKIMVQKKLEELQSMKQHLLFQQEEERQAQFMMRQETLAQQQLQLEQIQQLQQQLHQQLEEQKIRQIYQYNYDPSGTASPQTTTEQAILEGQYAALEGSQFWATEDATTTASAVVAIEIPQSQGWYTVQSDGVTQYIAPPGILSTVSEIPLTDVVVKEEKQPKKRSSGAKVRGQYDDMGENMTDDPRSFKKIVDSGVQTDDEDATDRSYVSRRRRTKKSVDTSVQTDDEDQDEWDMPTRSRRKARVGKYGDSMTEADKTKPLSKVSSIAVQTVAEISVQTEPVGTIRTPSIRARVDAKVEIIKHISAPEKTYKGGSLGCQTEADSDTQSPQYLSATSPPKDKKRPTPLEIGYSSHLRADSTVQLAPSPPKSPKVLYSPISPLSPGKALESAFVPYEKPLPDDISPQKVLHPDMAKVPPASPKTAKMMQRSMSDPKPLSPTADESSRAPFQYTEGYTTKGSQTMTSSGAQKKVKRTLPNPPPEEISTGTQSTFSTMGTVSRRRICRTNTMARAKILQDIDRELDLVERESAKLRKKQAELDEEEKEIDAKLRYLEMGINRRKEALLKEREKRERAYLQGVAEDRDYMSDSEVSSTRPTRIESQHGIERPRTAPQTEFSQFIPPQTQTESQLVPPTSPYTQYQYSSPALPTQAPTSYTQQSHFEQQTLYHQQVSPYQTQPTFQAVATMSFTPQVQPTPTPQPSYQLPSQMMVIQQKPRQTTLYLEPKITSNYEVIRNQPLMIAPVSTDNTFAVSHLGSKYNSLDLRIGLEERSSMASSPISSISADSFYADIDHHTPRNYVLIDDIGEITKGTAALSTAFSLHEKDLSKTDRLLRTTETRRSQEVTDFLAPLQSSSRLHSYVKAEEDPMEDPYELKLLKHQIKQEFRRGTESLDHLAGLSHYYHADTSYRHFPKSEKYSISRLTLEKQAAKQLPAAILYQKQSKHKKSLIDPKMSKFSPIQESRDLEPDYSSYMTSSTSSIGGISSRARLLQDDITFGLRKNITDQQKFMGSSLGTGLGTLGNTIRSALQDEADKPYSSGSRSRPSSRPSSVYGLDLSIKRDSSSSSLRLKAQEAEALDVSFSHASSSARTKPTSLPISQSRGRIPIVAQNSEEESPLSPVGQPMGMARAAAGPLPPISADTRDQFGSSHSLPEVQQHMREESRTRGYDRDIAFIMDDFQHAMSDSEAYHLRREETDWFDKPRESRLENGHGLDRKLPERLVHSRPLSQHQEQIIQMNGKTMHYIFPHARIKITRDSKDHTVSGNGLGIRIVGGKEIPGHSGEIGAYIAKILPGGSAEQTGKLMEGMQVLEWNGIPLTSKTYEEVQSIISQQSGEAEICVRLDLNMLSDSENSQHLELHEPPKAVDKAKSPGVDPKQLAAELQKVSLQQSPLVLSSVVEKGSHVHSGPTSAGSSSVPSPGQPGSPSVSKKKHGSSKPTDGTKVVSHPITGEIQLQINYDLGNLIIHILQARNLVPRDNNGYSDPFVKVYLLPGRGQVMVVQNASAEYKRRTKHVQKSLNPEWNQTVIYKSISMEQLKKKTLEVTVWDYDRFSSNDFLGEVLIDLSSTSHLDNTPRWYPLKEQTESIDHGKSHSSQSSQQSPKPSVIKSRSHGIFPDPSKDMQVPTIEKSHSSPGSSKSSSEGHLRSHGPSRSQSKTSVTQTHLEDAGAAIAAAEAAVQQLRIQPTKPPNHRPAESSVSTGSSGSSFGSGYSVDSEGSSSTAGETNLFPIPRIGKMGQNGQEPVKQPGVGVGLADTEAKTQVMGEIKIALKKEMKTDGEQLIVEILQCRNITYKFKSPDHLPDLYVKIYVMNISTQKKVIKKKTRVCRHDREPSFNETFRFSLSPAGHSLQILLFSNGGKFMKKTLIGEACIWLDKVDLRKRIVNWHKLLVSPTQTH.

Over residues 1–21 (MGNEASLEGEGLPEGLAAAAA) the composition is skewed to low complexity. Disordered stretches follow at residues 1–154 (MGNE…SMMP) and 177–583 (DLIS…PSQG). Composition is skewed to basic and acidic residues over residues 114–125 (RTTDTFRSEQKL), 136–150 (KESKSRTDLKEEHKS), and 188–202 (ETTKKQKVVQKEQGK). Polar residues predominate over residues 232-244 (QDGTPKSISSQQP). 2 stretches are compositionally biased toward pro residues: residues 298–317 (LPSPSKPPIQQPTPGKPPAQ) and 352–371 (PVQPPGTTKPPAQPLGPAKP). The segment covering 376-385 (TGSEKPSSEQ) has biased composition (polar residues). A 10 X 10 AA tandem approximate repeats of P-A-K-P-Q-P-Q-Q-P-X region spans residues 397-555 (VGKTPAQQPG…PAKPSAQQST (159 aa)). The segment covering 467 to 493 (TKPPSQLPGPAKPPPQQPGPAKPPPQQ) has biased composition (pro residues). A compositionally biased stretch (low complexity) spans 494–506 (PGSAKPPSQQPGS). Residues 507–522 (TKPPPQQPGPAKPSPQ) show a composition bias toward pro residues. Low complexity predominate over residues 523-554 (QPGSTKPPSQQPGSAKPSAQQPSPAKPSAQQS). The segment at 589–613 (CPLCNTTELLLHVPEKANFNTCTEC) adopts a C4-type zinc-finger fold. Disordered regions lie at residues 650 to 929 (LAPV…TVTG) and 945 to 1058 (LIST…PEST). Residues 673-683 (SKSSPQPQQTS) show a composition bias toward low complexity. Basic and acidic residues-rich tracts occupy residues 684–702 (PKKDAAPKQDLSKAPEPKK) and 743–755 (EQDKAPVADDKPK). Residues 765-774 (DLVSSSSATT) are compositionally biased toward polar residues. The span at 841 to 857 (KGQKQVDPVQKKEEPKK) shows a compositional bias: basic and acidic residues. Over residues 873–882 (KGSPTPPGPR) the composition is skewed to pro residues. Residues 889-927 (VPTPQQSPKPQEQSRRFSLNLGSITDAPKSQPTTPQETV) show a composition bias toward polar residues. Phosphoserine occurs at positions 906 and 918. A Phosphothreonine modification is found at Thr922. Low complexity predominate over residues 949–969 (AGQPGPHSQSGPGAPMKQAPA). Composition is skewed to basic and acidic residues over residues 996–1012 (VKKETKAPAAEKLEPKA) and 1019–1034 (KRTETEKKPPPIKDSK). The C4-type zinc-finger motif lies at 1059 to 1082 (CPLCKTELNIGSKDPPNFNTCTEC). Disordered stretches follow at residues 1120–1163 (GDIR…QEQE), 1183–1386 (EKIP…TDEK), 1391–1410 (GLKKDSFSQESSPSSPSDLA), and 1423–1868 (QAST…SDPE). The segment covering 1126 to 1139 (PPAPSGPKASPMPV) has biased composition (pro residues). Composition is skewed to basic and acidic residues over residues 1193-1265 (QKQE…HDLL), 1307-1318 (PKEDDKTTKTIK), and 1330-1347 (DQVEPGKEKTEKEDDKSD). A compositionally biased stretch (low complexity) spans 1348–1358 (TSSSQQPKSPQ). 8 positions are modified to phosphoserine: Ser1356, Ser1366, Ser1367, Ser1396, Ser1398, Ser1401, Ser1402, and Ser1405. Over residues 1359-1374 (GLSDTGYSSDGISSSL) the composition is skewed to polar residues. A compositionally biased stretch (low complexity) spans 1398-1407 (SQESSPSSPS). Basic and acidic residues-rich tracts occupy residues 1428–1451 (ADEKSEKKTQPHEVSPEQPKDQEK) and 1469–1510 (KESQ…REPY). Phosphoserine is present on residues Ser1516, Ser1517, Ser1519, Ser1522, Ser1546, Ser1549, Ser1570, and Ser1572. The span at 1564-1576 (SADEDASGSEDDE) shows a compositional bias: acidic residues. Thr1617 bears the Phosphothreonine mark. 3 positions are modified to phosphoserine: Ser1618, Ser1628, and Ser1640. The segment covering 1631 to 1640 (DEDDEAFDES) has biased composition (acidic residues). A compositionally biased stretch (basic and acidic residues) spans 1641-1652 (PELKYRETKSQE). Positions 1671–1689 (ELNSTIADKYSAESSQKKT) are enriched in polar residues. The segment covering 1693–1703 (FDEEPELEMES) has biased composition (acidic residues). A Phosphoserine modification is found at Ser1703. At Thr1705 the chain carries Phosphothreonine. Residues Ser1707 and Ser1712 each carry the phosphoserine modification. Residues 1715 to 1732 (EGSSSLHASSFTPGTSPT) show a composition bias toward polar residues. Residues 1772–1785 (DSSEEEELREEEEL) show a composition bias toward acidic residues. Ser1773 and Ser1774 each carry phosphoserine. Residues 1786–1799 (LKEQEKQREIEQQQ) are compositionally biased toward basic and acidic residues. Thr1825 is modified (phosphothreonine). Position 1831 is a phosphoserine (Ser1831). Residues 1840-1855 (EELRQAAEMEELHRSS) are compositionally biased toward basic and acidic residues. Ser1860, Ser1865, Ser1873, and Ser1894 each carry phosphoserine. 3 disordered regions span residues 2169–2192 (PSESATSVPPSDTPSLTSSVSSVC), 2365–2438 (ETFG…PTIL), and 2504–2536 (EPSKPPIAPKPVIPQLPTTTQKPTDIHPKPTGL). Low complexity-rich tracts occupy residues 2174–2192 (TSVPPSDTPSLTSSVSSVC) and 2374–2387 (SQLPSGSPSVSSLP). 2 stretches are compositionally biased toward pro residues: residues 2404-2433 (QPPPPPPPPPPPPPPPPPPPPPPLPPPTSP) and 2506-2517 (SKPPIAPKPVIP). Ser2562 is subject to Phosphoserine. Position 3069 is a phosphothreonine (Thr3069). 2 disordered regions span residues 3407 to 3508 (EKQP…DKTK) and 3558 to 3626 (KTYK…LYSP). A compositionally biased stretch (basic and acidic residues) spans 3432-3441 (DDPRSFKKIV). Ser3443 is modified (phosphoserine). A phosphothreonine mark is found at Thr3447 and Thr3474. Residues 3474–3483 (TDDEDQDEWD) show a composition bias toward acidic residues. Over residues 3574 to 3585 (DTQSPQYLSATS) the composition is skewed to polar residues. 11 positions are modified to phosphoserine: Ser3577, Ser3585, Ser3615, Ser3619, Ser3625, Ser3628, Ser3631, Ser3652, Ser3678, Ser3680, and Ser3686. Disordered regions lie at residues 3652–3746 (SPQK…MGTV) and 3833–3908 (YMSD…QQSH). Polar residues-rich tracts occupy residues 3701–3716 (EGYTTKGSQTMTSSGA) and 3733–3745 (STGTQSTFSTMGT). At Ser3835 the chain carries Phosphoserine. Over residues 3845 to 3857 (TRIESQHGIERPR) the composition is skewed to basic and acidic residues. Over residues 3859-3908 (APQTEFSQFIPPQTQTESQLVPPTSPYTQYQYSSPALPTQAPTSYTQQSH) the composition is skewed to polar residues. Ser4088 and Ser4204 each carry phosphoserine. The interval 4278 to 4301 (EADKPYSSGSRSRPSSRPSSVYGL) is disordered. Residues 4282–4301 (PYSSGSRSRPSSRPSSVYGL) show a composition bias toward low complexity. Phosphoserine occurs at positions 4358, 4362, 4365, 4394, and 4430. Positions 4389–4411 (RDQFGSSHSLPEVQQHMREESRT) are disordered. The 95-residue stretch at 4496–4590 (RIKITRDSKD…EAEICVRLDL (95 aa)) folds into the PDZ domain. Disordered stretches follow at residues 4597–4618 (ENSQHLELHEPPKAVDKAKSPG) and 4645–4690 (EKGS…TKVV). Positions 4598-4615 (NSQHLELHEPPKAVDKAK) are enriched in basic and acidic residues. Low complexity predominate over residues 4652–4673 (SGPTSAGSSSVPSPGQPGSPSV). Position 4664 is a phosphoserine (Ser4664). In terms of domain architecture, C2 1 spans 4694-4823 (ITGEIQLQIN…SHLDNTPRWY (130 aa)). 2 residues coordinate Ca(2+): Asp4723 and Asp4729. Ser4778 carries the post-translational modification Phosphoserine. Positions 4793, 4795, 4798, and 4801 each coordinate Ca(2+). Disordered regions lie at residues 4830–4907 (ESID…VTQT) and 4930–4986 (PTKP…QNGQ). 2 stretches are compositionally biased toward low complexity: residues 4838-4853 (HSSQSSQQSPKPSVIK) and 4877-4887 (SSPGSSKSSSE). The segment covering 4895–4907 (PSRSQSKTSVTQT) has biased composition (polar residues). Over residues 4941–4965 (SSVSTGSSGSSFGSGYSVDSEGSSS) the composition is skewed to low complexity. Residues 5007–5132 (VMGEIKIALK…DLRKRIVNWH (126 aa)) form the C2 2 domain.

In terms of assembly, interacts with BSN, ERC2/CAST1, RIMS1 and UNC13A. Interacts (via C-terminus) with TRIO (via N-terminus). Interacts with CTBP1. Interacts with SIAH1; this interaction negatively regulates SIAH1 E3 ligase activity. Directly interacts with GIT1 and GIT2. It depends on Ca(2+) as a cofactor. Moderately expressed in the developing cerebral cortex.

It is found in the presynaptic active zone. Scaffold protein of the presynaptic cytomatrix at the active zone (CAZ) which is the place in the synapse where neurotransmitter is released. After synthesis, participates in the formation of Golgi-derived membranous organelles termed Piccolo-Bassoon transport vesicles (PTVs) that are transported along axons to sites of nascent synaptic contacts. At the presynaptic active zone, regulates the spatial organization of synaptic vesicle cluster, the protein complexes that execute membrane fusion and compensatory endocytosis. Organizes as well the readily releasable pool of synaptic vesicles and safeguards a fraction of them to be not immediately available for action potential-induced release. Also functions in processes other than assembly such as the regulation of specific presynaptic protein ubiquitination by interacting with SIAH1 or the regulation of presynaptic autophagy. Also mediates synapse to nucleus communication leading to reconfiguration of gene expression by associating with the transcriptional corepressor CTBP1 and by subsequently reducing the size of its pool available for nuclear import. In Homo sapiens (Human), this protein is Protein piccolo.